The chain runs to 681 residues: Glycogen-binding subunit 76A (681 aa).

5 disordered regions span residues 1–20 (MNDPGDIPLTHTSTPDSRPP), 53–94 (LGSQ…DLQP), 232–251 (SLTEVEQTKPEEGKLTNGHL), 285–391 (FADR…ASNL), and 405–435 (QDATEAVEKSGAPSRGTTVDTTDDEDDCRPQ). Positions 59–69 (EEGEGNAEDEP) are enriched in acidic residues. The span at 72–91 (NGTSTNTWVNSHDSEQTVTD) shows a compositional bias: polar residues. 3 stretches are compositionally biased toward basic and acidic residues: residues 237 to 251 (EQTKPEEGKLTNGHL), 297 to 308 (RVQKESSQERVP), and 321 to 336 (PSDRVQTDASDERVQE). Residues 353-364 (TESISTEVTTLE) show a composition bias toward polar residues. Over residues 365–374 (RSPEESRNDE) the composition is skewed to basic and acidic residues. The CBM21 domain maps to 525 to 632 (AVREKQVSLE…NNYGANYCFQ (108 aa)). T545 bears the Phosphothreonine mark. Phosphoserine is present on residues S547 and S549.

The protein is Glycogen-binding subunit 76A (Gbs-76A) of Drosophila melanogaster (Fruit fly).